Reading from the N-terminus, the 361-residue chain is Chorismate synthase (361 aa).

Residues R48 and R54 each contribute to the NADP(+) site. Residues 125–127 (RSS), 238–239 (NA), G278, 293–297 (KPTSS), and R319 each bind FMN.

It belongs to the chorismate synthase family. Homotetramer. FMNH2 serves as cofactor.

The enzyme catalyses 5-O-(1-carboxyvinyl)-3-phosphoshikimate = chorismate + phosphate. It participates in metabolic intermediate biosynthesis; chorismate biosynthesis; chorismate from D-erythrose 4-phosphate and phosphoenolpyruvate: step 7/7. Its function is as follows. Catalyzes the anti-1,4-elimination of the C-3 phosphate and the C-6 proR hydrogen from 5-enolpyruvylshikimate-3-phosphate (EPSP) to yield chorismate, which is the branch point compound that serves as the starting substrate for the three terminal pathways of aromatic amino acid biosynthesis. This reaction introduces a second double bond into the aromatic ring system. The sequence is that of Chorismate synthase from Shigella flexneri.